The sequence spans 37 residues: Large ribosomal subunit protein bL36 (37 aa).

It belongs to the bacterial ribosomal protein bL36 family.

This Geobacter sp. (strain M21) protein is Large ribosomal subunit protein bL36.